A 355-amino-acid chain; its full sequence is Probable nitronate monooxygenase (355 aa).

Residues asparagine 71, glutamine 175, glycine 180, glycine 218, and 237–240 (QMGT) each bind FMN.

This sequence belongs to the nitronate monooxygenase family. NMO class I subfamily. Requires FMN as cofactor.

The catalysed reaction is 3 propionate 3-nitronate + 3 O2 + H2O = 3 3-oxopropanoate + 2 nitrate + nitrite + H2O2 + 3 H(+). In terms of biological role, nitronate monooxygenase that uses molecular oxygen to catalyze the oxidative denitrification of alkyl nitronates. Acts on propionate 3-nitronate (P3N), the presumed physiological substrate. Probably functions in the detoxification of P3N, a metabolic poison produced by plants and fungi as a defense mechanism. The protein is Probable nitronate monooxygenase of Staphylococcus aureus (strain MSSA476).